The chain runs to 974 residues: MLPAVFVILALSAVQGLEETLMDTKWTTSELAWVAYPDSGWEEVSGYDEASNPIRTYQVCNVRDSNQNNWLRTQFIPRQDVQRVYVELKFTVRDCNSLPNLRGSCKETFNFFYYESDSDSASADSPFWMENPYIKVDTIAPDESFSRRDSGRVNTKIRSFGPISRAGFYLAFQDLGACVSLISVRVFFKKCPRTTAGFASFPETITGAEPTSLVIAPGTCVPNALEVSVPLKLYCNGDGDWMVPVGACTCAAGFEPAGKDTQCQACKRGTYKSKQGEGSCMPCPANSRAISSAATICSCQNGYYRADGESAETACTSVPSAPRQVISNVNETSVVLEWAEPGHLGGRDDVLYNVICKKCLERLCSRCDDNVQFWPRQLGVTQRLVSVSHLQAHTKYSFEIQAVNGVSGKSPHIPNYFTVNITTNQAAPSSVPMVQSHGSLANSLTLSWAPPESPNGIILDYEIKYYAKGHIGAGNTVTSQRTTVRMEGMTPDTVYVVQVRARTVAGYGAYSEPREFQTIAEDGDRSSLQEQVPMVVGSVTAGLIFIIAVVIIVIVCFSRKQRNDSESEYTEKLQQYMVPGMKLYIDPFTYEDPNEAVRDFAKEIDISCVKIEEVIGAGEFGEVCRGKLKQAGRREQFVAIKTLKAGYTEQQRRDFLGEASIMGQFDHPNIIRLEGVVTRSRPVMILTEFMENGALDSFLRMNDGQFTVIQLVGILRGIASGMKYLSEMNYVHRDLAARNILVNSNLVCKVSDFGLSRFLENSRSDPTYTSALGGKIPIRWTAPEAISYRKFTSASDVWSYGIVMWEVMSYGERPYWDMSNQDVINAIEQDYRLPPPMDCPSALHQLMLDCWLRDRNLRPKFSQIVSSLDKLIRNAASLKVTSPGQAGVSQQLLDRTVPDYTTFPTVSDWLEAIKMGQYQENFLSAGFTSFHLVAQMTAEDLLRIGVTLAGHQKKLLNSVQDMRLQMSQTLPVQV.

Residues 1-16 (MLPAVFVILALSAVQG) form the signal peptide. Residues 17–534 (LEETLMDTKW…RSSLQEQVPM (518 aa)) lie on the Extracellular side of the membrane. Residues 18–196 (EETLMDTKWT…FFKKCPRTTA (179 aa)) enclose the Eph LBD domain. A disulfide bridge connects residues C60 and C178. 2 Fibronectin type-III domains span residues 318 to 426 (VPSA…TNQA) and 427 to 522 (APSS…IAED). 2 N-linked (GlcNAc...) asparagine glycosylation sites follow: N330 and N420. Residues 535–555 (VVGSVTAGLIFIIAVVIIVIV) traverse the membrane as a helical segment. Residues 556–974 (CFSRKQRNDS…QMSQTLPVQV (419 aa)) are Cytoplasmic-facing. A Phosphotyrosine; by autocatalysis modification is found at Y590. Residues 609-872 (VKIEEVIGAG…QIVSSLDKLI (264 aa)) enclose the Protein kinase domain. Residues 615–623 (IGAGEFGEV) and K641 each bind ATP. D734 (proton acceptor) is an active-site residue. An SAM domain is found at 901–965 (TTFPTVSDWL…LNSVQDMRLQ (65 aa)). The short motif at 972-974 (VQV) is the PDZ-binding element.

The protein belongs to the protein kinase superfamily. Tyr protein kinase family. Ephrin receptor subfamily. Heterotetramer upon binding of the ligand. The heterotetramer is composed of an ephrin dimer and a receptor dimer. Oligomerization is probably required to induce biological responses. Post-translationally, phosphorylated. Autophosphorylates upon ligand-binding. Autophosphorylation on Tyr-590 is required for interaction with SH2 domain-containing proteins. In terms of tissue distribution, expressed in the embryo in pre-somitic mesoderm, caudal somites, midbrain, and cement gland. Most abundant in adult brain, eye, heart, lung and ovary. Lower levels in intestine, kidney, oviduct and pharynx.

It is found in the cell membrane. It localises to the cell projection. The protein localises to the dendrite. The enzyme catalyses L-tyrosyl-[protein] + ATP = O-phospho-L-tyrosyl-[protein] + ADP + H(+). Receptor tyrosine kinase which binds promiscuously transmembrane ephrin-B family ligands residing on adjacent cells, leading to contact-dependent bidirectional signaling into neighboring cells. The signaling pathway downstream of the receptor is referred to as forward signaling while the signaling pathway downstream of the ephrin ligand is referred to as reverse signaling. Generally has an overlapping and redundant function with EPHB2. Like EPHB2, functions in axon guidance during development. In addition to its role in axon guidance also plays an important redundant role with other ephrin-B receptors in development and maturation of dendritic spines and the formation of excitatory synapses. May control other aspects of development through regulation of cell migration and positioning. This Xenopus laevis (African clawed frog) protein is Ephrin type-B receptor 3 (ephb3).